Here is a 247-residue protein sequence, read N- to C-terminus: TM2 domain-containing protein 3 (247 aa).

The N-terminal stretch at 1–29 (MAGGVLPLRGLRALCRVLLFLSQFCILSG) is a signal peptide. Over 30–179 (GEQSQALAQS…RTFPKMLYCN (150 aa)) the chain is Extracellular. N-linked (GlcNAc...) asparagine glycans are attached at residues N87, N122, N140, N157, N169, and N179. Residues 180–200 (WTGGYKWSTALALSITLGGFG) traverse the membrane as a helical segment. The region spanning 183-230 (GYKWSTALALSITLGGFGADRFYLGQWREGLGKLFSFGGLGIWTLIDV) is the TM2 domain. Topologically, residues 201 to 215 (ADRFYLGQWREGLGK) are cytoplasmic. The chain crosses the membrane as a helical span at residues 216–236 (LFSFGGLGIWTLIDVLLIGVG). Residues 237 to 247 (YVGPADGSLYI) are Extracellular-facing.

Belongs to the TM2 family. As to expression, widely expressed.

It is found in the membrane. In terms of biological role, probable positive regulator of Notch signaling. The chain is TM2 domain-containing protein 3 (TM2D3) from Homo sapiens (Human).